Reading from the N-terminus, the 455-residue chain is 23S rRNA (uracil(1939)-C(5))-methyltransferase RlmD (455 aa).

The region spanning 12-70 (SKQLSAKLSLSVTQLDHLGAGIAQHQGKIVFIPGVLPGETATVQFVEQKKSYAKAKLIS) is the TRAM domain. [4Fe-4S] cluster contacts are provided by C83, C89, C92, and C174. Residues Q288, F317, N322, E338, D365, and D385 each contribute to the S-adenosyl-L-methionine site. The active-site Nucleophile is the C411.

It belongs to the class I-like SAM-binding methyltransferase superfamily. RNA M5U methyltransferase family. RlmD subfamily.

It catalyses the reaction uridine(1939) in 23S rRNA + S-adenosyl-L-methionine = 5-methyluridine(1939) in 23S rRNA + S-adenosyl-L-homocysteine + H(+). Catalyzes the formation of 5-methyl-uridine at position 1939 (m5U1939) in 23S rRNA. This is 23S rRNA (uracil(1939)-C(5))-methyltransferase RlmD from Shewanella frigidimarina (strain NCIMB 400).